A 145-amino-acid chain; its full sequence is Large ribosomal subunit protein uL16 (145 aa).

The protein belongs to the universal ribosomal protein uL16 family. Part of the 50S ribosomal subunit.

Functionally, binds 23S rRNA and is also seen to make contacts with the A and possibly P site tRNAs. The protein is Large ribosomal subunit protein uL16 of Lachnospira eligens (strain ATCC 27750 / DSM 3376 / VPI C15-48 / C15-B4) (Eubacterium eligens).